Here is a 122-residue protein sequence, read N- to C-terminus: Small ribosomal subunit protein uS13 (122 aa).

Residues 95-122 (GLPVHGQRTHTNARTRKGPRKGAVGKKK) form a disordered region.

The protein belongs to the universal ribosomal protein uS13 family. As to quaternary structure, part of the 30S ribosomal subunit. Forms a loose heterodimer with protein S19. Forms two bridges to the 50S subunit in the 70S ribosome.

Its function is as follows. Located at the top of the head of the 30S subunit, it contacts several helices of the 16S rRNA. In the 70S ribosome it contacts the 23S rRNA (bridge B1a) and protein L5 of the 50S subunit (bridge B1b), connecting the 2 subunits; these bridges are implicated in subunit movement. Contacts the tRNAs in the A and P-sites. The sequence is that of Small ribosomal subunit protein uS13 from Lawsonia intracellularis (strain PHE/MN1-00).